Consider the following 85-residue polypeptide: Granaticin polyketide synthase acyl carrier protein (85 aa).

The region spanning 3–81 (RLTLDGLRTI…VLLDLVNGAQ (79 aa)) is the Carrier domain. Serine 41 carries the post-translational modification O-(pantetheine 4'-phosphoryl)serine.

Post-translationally, 4'-phosphopantetheine is transferred from CoA to a specific serine of the apo-ACP-like protein.

Its pathway is antibiotic biosynthesis; granaticin biosynthesis. Functionally, acyl carrier protein. This chain is Granaticin polyketide synthase acyl carrier protein, found in Streptomyces violaceoruber.